A 159-amino-acid polypeptide reads, in one-letter code: Phosphopantetheine adenylyltransferase (159 aa).

Ser9 is a substrate binding site. ATP-binding positions include 9–10 and His17; that span reads SF. 3 residues coordinate substrate: Lys41, Leu73, and Lys87. ATP is bound by residues 88–90, Glu98, and 122–128; these read GLR and YSFLSSS.

It belongs to the bacterial CoaD family. Homohexamer. Mg(2+) is required as a cofactor.

Its subcellular location is the cytoplasm. The enzyme catalyses (R)-4'-phosphopantetheine + ATP + H(+) = 3'-dephospho-CoA + diphosphate. Its pathway is cofactor biosynthesis; coenzyme A biosynthesis; CoA from (R)-pantothenate: step 4/5. Functionally, reversibly transfers an adenylyl group from ATP to 4'-phosphopantetheine, yielding dephospho-CoA (dPCoA) and pyrophosphate. This is Phosphopantetheine adenylyltransferase from Streptomyces coelicolor (strain ATCC BAA-471 / A3(2) / M145).